We begin with the raw amino-acid sequence, 81 residues long: ATP synthase subunit c (81 aa).

Helical transmembrane passes span 5–25 (IAAG…IGAG) and 57–77 (VGLV…FVFA).

It belongs to the ATPase C chain family. In terms of assembly, F-type ATPases have 2 components, F(1) - the catalytic core - and F(0) - the membrane proton channel. F(1) has five subunits: alpha(3), beta(3), gamma(1), delta(1), epsilon(1). F(0) has three main subunits: a(1), b(2) and c(10-14). The alpha and beta chains form an alternating ring which encloses part of the gamma chain. F(1) is attached to F(0) by a central stalk formed by the gamma and epsilon chains, while a peripheral stalk is formed by the delta and b chains.

It localises to the cell membrane. F(1)F(0) ATP synthase produces ATP from ADP in the presence of a proton or sodium gradient. F-type ATPases consist of two structural domains, F(1) containing the extramembraneous catalytic core and F(0) containing the membrane proton channel, linked together by a central stalk and a peripheral stalk. During catalysis, ATP synthesis in the catalytic domain of F(1) is coupled via a rotary mechanism of the central stalk subunits to proton translocation. Its function is as follows. Key component of the F(0) channel; it plays a direct role in translocation across the membrane. A homomeric c-ring of between 10-14 subunits forms the central stalk rotor element with the F(1) delta and epsilon subunits. This is ATP synthase subunit c from Mycobacterium sp. (strain JLS).